Here is a 211-residue protein sequence, read N- to C-terminus: Protein-methionine-sulfoxide reductase heme-binding subunit MsrQ (211 aa).

The next 5 membrane-spanning stretches (helical) occupy residues 8–28 (VIWL…WLVW), 54–74 (FLLA…PLLI), 82–102 (LWCF…ELGV), 116–136 (PYLT…FTST), and 153–173 (FVYL…KIIS).

Belongs to the MsrQ family. Heterodimer of a catalytic subunit (MsrP) and a heme-binding subunit (MsrQ). FMN serves as cofactor. Requires heme b as cofactor.

It localises to the cell inner membrane. Functionally, part of the MsrPQ system that repairs oxidized periplasmic proteins containing methionine sulfoxide residues (Met-O), using respiratory chain electrons. Thus protects these proteins from oxidative-stress damage caused by reactive species of oxygen and chlorine generated by the host defense mechanisms. MsrPQ is essential for the maintenance of envelope integrity under bleach stress, rescuing a wide series of structurally unrelated periplasmic proteins from methionine oxidation, including the primary periplasmic chaperone SurA and the lipoprotein Pal. MsrQ provides electrons for reduction to the reductase catalytic subunit MsrP, using the quinone pool of the respiratory chain. The chain is Protein-methionine-sulfoxide reductase heme-binding subunit MsrQ from Escherichia coli O6:K15:H31 (strain 536 / UPEC).